A 274-amino-acid chain; its full sequence is MSSLIKEIEEAWQIKDKLLQDSSKLITLKQTLNDIIESLNQGTIRVCEKQENSWHVNEWVKKAILLYFITTESQLYNNNYNSWYDKVAPKFSADTDKNTFKEAAIRKVPGAVVRTGTYIAKNVVIMPSFINIGAYIDEGTMIDTWATIGSCAQIGKNCHISGGTGIGGVLEPLQAKPVIIEDNCFIGARSEIAEGVIVEEGAVISMGVFIGSSTKIVYRDTGEIIYGRIPAYSVVVPGVLPAKEAGKPGLYCVVIVKQVDKTTRAKVSINDLLR.

Residues Arg-106 and Asp-143 each coordinate substrate.

The protein belongs to the transferase hexapeptide repeat family. As to quaternary structure, homotrimer.

Its subcellular location is the cytoplasm. The enzyme catalyses (S)-2,3,4,5-tetrahydrodipicolinate + succinyl-CoA + H2O = (S)-2-succinylamino-6-oxoheptanedioate + CoA. Its pathway is amino-acid biosynthesis; L-lysine biosynthesis via DAP pathway; LL-2,6-diaminopimelate from (S)-tetrahydrodipicolinate (succinylase route): step 1/3. This chain is 2,3,4,5-tetrahydropyridine-2,6-dicarboxylate N-succinyltransferase, found in Rickettsia conorii (strain ATCC VR-613 / Malish 7).